We begin with the raw amino-acid sequence, 106 residues long: MNDSEFHRLADQLWLTIEERLDDWDGDSDIDCEINGGVLTITFENGSKIIINRQEPLHQVWLATKQGGYHFDLKGDEWICDRSGETFWDLLEQAATQQAGETVSFR.

Belongs to the frataxin family.

In terms of biological role, involved in iron-sulfur (Fe-S) cluster assembly. May act as a regulator of Fe-S biogenesis. This chain is Iron-sulfur cluster assembly protein CyaY, found in Escherichia coli O139:H28 (strain E24377A / ETEC).